The sequence spans 142 residues: Large ribosomal subunit protein uL11 (142 aa).

The protein belongs to the universal ribosomal protein uL11 family. Part of the ribosomal stalk of the 50S ribosomal subunit. Interacts with L10 and the large rRNA to form the base of the stalk. L10 forms an elongated spine to which L12 dimers bind in a sequential fashion forming a multimeric L10(L12)X complex. Post-translationally, one or more lysine residues are methylated.

Functionally, forms part of the ribosomal stalk which helps the ribosome interact with GTP-bound translation factors. This is Large ribosomal subunit protein uL11 from Photobacterium profundum (strain SS9).